Consider the following 171-residue polypeptide: Photosystem I assembly protein Ycf3 (171 aa).

TPR repeat units follow at residues 35-68 (AFTY…EIDP), 72-105 (SYIL…NPSL), and 120-153 (GEQA…APNN).

Belongs to the Ycf3 family.

The protein localises to the plastid. It is found in the chloroplast thylakoid membrane. Essential for the assembly of the photosystem I (PSI) complex. May act as a chaperone-like factor to guide the assembly of the PSI subunits. The polypeptide is Photosystem I assembly protein Ycf3 (Psilotum nudum (Whisk fern)).